Reading from the N-terminus, the 337-residue chain is Holliday junction branch migration complex subunit RuvB (337 aa).

A large ATPase domain (RuvB-L) region spans residues 4–185 (ADRLISNSFE…FGITQRLEYY (182 aa)). ATP contacts are provided by residues Ile-24, Arg-25, Gly-66, Lys-69, Thr-70, Thr-71, 132 to 134 (EDY), Arg-175, Tyr-185, and Arg-222. Mg(2+) is bound at residue Thr-70. The interval 186–256 (KVDDLKDIVQ…TAKKALDMLD (71 aa)) is small ATPAse domain (RuvB-S). Positions 259–337 (SSGFDYMDRK…HFGLDIPEAR (79 aa)) are head domain (RuvB-H). DNA contacts are provided by Arg-314 and Arg-319.

This sequence belongs to the RuvB family. As to quaternary structure, homohexamer. Forms an RuvA(8)-RuvB(12)-Holliday junction (HJ) complex. HJ DNA is sandwiched between 2 RuvA tetramers; dsDNA enters through RuvA and exits via RuvB. An RuvB hexamer assembles on each DNA strand where it exits the tetramer. Each RuvB hexamer is contacted by two RuvA subunits (via domain III) on 2 adjacent RuvB subunits; this complex drives branch migration. In the full resolvosome a probable DNA-RuvA(4)-RuvB(12)-RuvC(2) complex forms which resolves the HJ.

It is found in the cytoplasm. The catalysed reaction is ATP + H2O = ADP + phosphate + H(+). In terms of biological role, the RuvA-RuvB-RuvC complex processes Holliday junction (HJ) DNA during genetic recombination and DNA repair, while the RuvA-RuvB complex plays an important role in the rescue of blocked DNA replication forks via replication fork reversal (RFR). RuvA specifically binds to HJ cruciform DNA, conferring on it an open structure. The RuvB hexamer acts as an ATP-dependent pump, pulling dsDNA into and through the RuvAB complex. RuvB forms 2 homohexamers on either side of HJ DNA bound by 1 or 2 RuvA tetramers; 4 subunits per hexamer contact DNA at a time. Coordinated motions by a converter formed by DNA-disengaged RuvB subunits stimulates ATP hydrolysis and nucleotide exchange. Immobilization of the converter enables RuvB to convert the ATP-contained energy into a lever motion, pulling 2 nucleotides of DNA out of the RuvA tetramer per ATP hydrolyzed, thus driving DNA branch migration. The RuvB motors rotate together with the DNA substrate, which together with the progressing nucleotide cycle form the mechanistic basis for DNA recombination by continuous HJ branch migration. Branch migration allows RuvC to scan DNA until it finds its consensus sequence, where it cleaves and resolves cruciform DNA. In Photobacterium profundum (strain SS9), this protein is Holliday junction branch migration complex subunit RuvB.